Reading from the N-terminus, the 495-residue chain is Protein-serine O-palmitoleoyltransferase porcupine (495 aa).

Transmembrane regions (helical) follow at residues 46-66, 92-112, 184-204, 232-252, 358-378, 403-422, 434-454, and 475-495; these read TQYI…VLIV, VIDH…AVQW, TVLS…GPWI, MLIH…FLLT, PFGT…LHGL, LATI…SCTV, VINM…GCIF, and TELN…YFVI. His376 is a catalytic residue.

The protein belongs to the membrane-bound acyltransferase family. Porcupine subfamily.

The protein resides in the endoplasmic reticulum membrane. It catalyses the reaction [Wnt protein]-L-serine + (9Z)-hexadecenoyl-CoA = [Wnt protein]-O-(9Z)-hexadecenoyl-L-serine + CoA. Its function is as follows. Protein-serine O-palmitoleoyltransferase that acts as a key regulator of the Wnt signaling pathway by mediating the attachment of palmitoleate, a 16-carbon monounsaturated fatty acid (C16:1(9Z)), to Wnt proteins. Serine palmitoleoylation of WNT proteins is required for efficient binding to frizzled receptors. This is Protein-serine O-palmitoleoyltransferase porcupine from Anopheles gambiae (African malaria mosquito).